The following is a 63-amino-acid chain: Kurtoxin-like II (63 aa).

In terms of domain architecture, LCN-type CS-alpha/beta spans 2–62 (IDGYPVDYWN…ARIKRSGRCR (61 aa)). 4 disulfide bridges follow: C12/C61, C16/C37, C23/C44, and C27/C46.

Belongs to the long (4 C-C) scorpion toxin superfamily. Sodium channel inhibitor family. Alpha subfamily. As to expression, expressed by the venom gland.

The protein resides in the secreted. This neurotoxin acts on sodium and calcium channels. Potently inhibits native voltage-gated T-type calcium channel activity in mouse male germ cells. Also binds Cav3.1/CACNA1G, Cav3.2/CACNA1H, and Cav3.3/CACNA1I T-type calcium channels and inhibits the channels by modifying voltage-dependent gating. In addition, binds and significantly inhibits the inactivation of activated sodium channels (Nav1.2/SCN2A and Nav1.5/SCN5A). The protein is Kurtoxin-like II of Parabuthus granulatus (Granulated thick-tailed scorpion).